The following is a 147-amino-acid chain: Hemoglobin subunit beta-2 (147 aa).

Residues 3 to 147 (EWTDSERAII…VVSALGRQYH (145 aa)) enclose the Globin domain. 2 residues coordinate heme b: H64 and H93.

The protein belongs to the globin family. In terms of assembly, hb 3 is a heterotetramer of two alpha-2 and two beta-2 chains. As to expression, red blood cells.

Functionally, involved in oxygen transport from gills to the various peripheral tissues. The polypeptide is Hemoglobin subunit beta-2 (hbb2) (Boreogadus saida (Polar cod)).